A 69-amino-acid polypeptide reads, in one-letter code: UPF0437 protein AZC_3451 (69 aa).

The protein belongs to the UPF0437 family.

The protein is UPF0437 protein AZC_3451 of Azorhizobium caulinodans (strain ATCC 43989 / DSM 5975 / JCM 20966 / LMG 6465 / NBRC 14845 / NCIMB 13405 / ORS 571).